We begin with the raw amino-acid sequence, 574 residues long: K(+)/H(+) antiporter NhaP2 (574 aa).

13 consecutive transmembrane segments (helical) span residues 6–26 (INSF…LSPV), 34–54 (ILLI…GGIL), 58–78 (YSTA…DGGM), 87–107 (VALW…TSIT), 109–129 (VMAA…GAIV), 173–193 (IAIL…ISFI), 196–216 (FGLG…LVNL), 219–239 (LAEG…YAAS), 242–262 (LGGS…NKPT), 271–291 (VLDG…GLLL), 299–319 (IWLP…PLAV), 335–355 (WFIS…VFPM), and 359–379 (LPGA…SLLV). In terms of domain architecture, RCK C-terminal spans 405–486 (SGVEIYPSSE…LEALSNLFSQ (82 aa)).

This sequence belongs to the monovalent cation:proton antiporter 1 (CPA1) transporter (TC 2.A.36) family. NhaP2 subfamily.

It localises to the cell inner membrane. It carries out the reaction K(+)(in) + H(+)(out) = K(+)(out) + H(+)(in). In terms of biological role, k(+)/H(+) antiporter that extrudes potassium in exchange for external protons and maintains the internal concentration of potassium under toxic levels. The protein is K(+)/H(+) antiporter NhaP2 of Shewanella sp. (strain ANA-3).